The following is a 423-amino-acid chain: Maltoporin 1 (423 aa).

The signal sequence occupies residues Met1–Ala23.

This sequence belongs to the porin LamB (TC 1.B.3) family. As to quaternary structure, homotrimer formed of three 18-stranded antiparallel beta-barrels, containing three independent channels.

The protein resides in the cell outer membrane. It catalyses the reaction beta-maltose(in) = beta-maltose(out). In terms of biological role, involved in the transport of maltose and maltodextrins. The chain is Maltoporin 1 from Klebsiella pneumoniae subsp. pneumoniae (strain ATCC 700721 / MGH 78578).